A 495-amino-acid chain; its full sequence is Chromosomal replication initiator protein DnaA (495 aa).

The domain I, interacts with DnaA modulators stretch occupies residues 1-83; the sequence is MSVALWQQCL…KVQLTVGSRR (83 aa). The interval 83 to 158 is domain II; the sequence is RNVAMSSPRD…QVEGSLKHQS (76 aa). A disordered region spans residues 86 to 127; it reads AMSSPRDLGAPVSATTMNASRPTEAPAVHAAPRAKGDYADEQ. Residues 159 to 375 are domain III, AAA+ region; sequence GLNPNFTFET…GALKKVIADS (217 aa). ATP is bound by residues G203, G205, K206, and T207. The tract at residues 376-495 is domain IV, binds dsDNA; sequence HFMGKPITQD…YKNLLRLLTS (120 aa).

Belongs to the DnaA family. As to quaternary structure, oligomerizes as a right-handed, spiral filament on DNA at oriC.

The protein resides in the cytoplasm. Plays an essential role in the initiation and regulation of chromosomal replication. ATP-DnaA binds to the origin of replication (oriC) to initiate formation of the DNA replication initiation complex once per cell cycle. Binds the DnaA box (a 9 base pair repeat at the origin) and separates the double-stranded (ds)DNA. Forms a right-handed helical filament on oriC DNA; dsDNA binds to the exterior of the filament while single-stranded (ss)DNA is stabiized in the filament's interior. The ATP-DnaA-oriC complex binds and stabilizes one strand of the AT-rich DNA unwinding element (DUE), permitting loading of DNA polymerase. After initiation quickly degrades to an ADP-DnaA complex that is not apt for DNA replication. Binds acidic phospholipids. This is Chromosomal replication initiator protein DnaA from Chromohalobacter salexigens (strain ATCC BAA-138 / DSM 3043 / CIP 106854 / NCIMB 13768 / 1H11).